The chain runs to 573 residues: Hemagglutinin-neuraminidase (573 aa).

Over 1–27 (MQDSHGNTQILNQANSMVKRTWRLLFR) the chain is Intravirion. A helical transmembrane segment spans residues 28–48 (IATLILLVSIFVLSLIIVLQS). Topologically, residues 49–573 (TPGNLQNDIN…DFQITLFLAA (525 aa)) are virion surface. Intrachain disulfides connect C173–C197, C187–C248, and C239–C252. The tract at residues 235–240 (NRKSCS) is involved in neuraminidase activity. N-linked (GlcNAc...) asparagine; by host glycosylation is found at N258, N330, N339, and N347. 3 disulfide bridges follow: C345–C466, C377–C387, and C460–C470. N-linked (GlcNAc...) asparagine; by host glycosylation occurs at N433. N-linked (GlcNAc...) asparagine; by host glycans are attached at residues N502 and N530. C540 and C551 are disulfide-bonded.

This sequence belongs to the paramyxoviruses hemagglutinin-neuraminidase family. As to quaternary structure, homotetramer; composed of disulfide-linked homodimers. Interacts with F protein trimer.

It is found in the virion membrane. The protein localises to the host cell membrane. The enzyme catalyses Hydrolysis of alpha-(2-&gt;3)-, alpha-(2-&gt;6)-, alpha-(2-&gt;8)- glycosidic linkages of terminal sialic acid residues in oligosaccharides, glycoproteins, glycolipids, colominic acid and synthetic substrates.. Functionally, attaches the virus to sialic acid-containing cell receptors and thereby initiating infection. Binding of HN protein to the receptor induces a conformational change that allows the F protein to trigger virion/cell membranes fusion. Its function is as follows. Neuraminidase activity ensures the efficient spread of the virus by dissociating the mature virions from the neuraminic acid containing glycoproteins. The polypeptide is Hemagglutinin-neuraminidase (HN) (Homo sapiens (Human)).